Consider the following 504-residue polypeptide: ATP synthase subunit alpha (504 aa).

171–178 is an ATP binding site; that stretch reads GDRQTGKT.

It belongs to the ATPase alpha/beta chains family. As to quaternary structure, F-type ATPases have 2 components, CF(1) - the catalytic core - and CF(0) - the membrane proton channel. CF(1) has five subunits: alpha(3), beta(3), gamma(1), delta(1), epsilon(1). CF(0) has three main subunits: a(1), b(2) and c(9-12). The alpha and beta chains form an alternating ring which encloses part of the gamma chain. CF(1) is attached to CF(0) by a central stalk formed by the gamma and epsilon chains, while a peripheral stalk is formed by the delta and b chains.

Its subcellular location is the cell inner membrane. The catalysed reaction is ATP + H2O + 4 H(+)(in) = ADP + phosphate + 5 H(+)(out). In terms of biological role, produces ATP from ADP in the presence of a proton gradient across the membrane. The alpha chain is a regulatory subunit. The polypeptide is ATP synthase subunit alpha (Helicobacter hepaticus (strain ATCC 51449 / 3B1)).